Reading from the N-terminus, the 137-residue chain is Hemoglobin subunit beta (137 aa).

A Globin domain is found at 3–137 (HWTQEERDEI…VIDAISKQYH (135 aa)). Residues histidine 54 and histidine 83 each coordinate heme b.

Belongs to the globin family. Heterotetramer of two alpha chains and two beta chains. As to expression, red blood cells.

Its function is as follows. Involved in oxygen transport from gills to the various peripheral tissues. The protein is Hemoglobin subunit beta (HBB) of Mustelus griseus (Spotless smooth-hound).